Consider the following 517-residue polypeptide: Cytochrome P450 52A8 (517 aa).

Cysteine 464 lines the heme pocket.

Belongs to the cytochrome P450 family. Heme serves as cofactor.

Together with an NADPH cytochrome P450 the enzyme system catalyzes the terminal hydroxylation as the first step in the assimilation of alkanes and fatty acids. Preferentially hydroxylates lauric acid. The sequence is that of Cytochrome P450 52A8 (CYP52A8) from Candida tropicalis (Yeast).